The chain runs to 221 residues: 7-cyano-7-deazaguanine synthase (221 aa).

8–18 (LSGGMDSAAVI) is an ATP binding site. Cysteine 186, cysteine 196, cysteine 199, and cysteine 202 together coordinate Zn(2+).

It belongs to the QueC family. Zn(2+) serves as cofactor.

It catalyses the reaction 7-carboxy-7-deazaguanine + NH4(+) + ATP = 7-cyano-7-deazaguanine + ADP + phosphate + H2O + H(+). It functions in the pathway purine metabolism; 7-cyano-7-deazaguanine biosynthesis. Functionally, catalyzes the ATP-dependent conversion of 7-carboxy-7-deazaguanine (CDG) to 7-cyano-7-deazaguanine (preQ(0)). The polypeptide is 7-cyano-7-deazaguanine synthase (Stenotrophomonas maltophilia (strain R551-3)).